The chain runs to 378 residues: 1-acyl-sn-glycerol-3-phosphate acyltransferase delta (378 aa).

A helical transmembrane segment spans residues phenylalanine 11 to isoleucine 31. The HXXXXD motif signature appears at histidine 96–aspartate 101. 3 consecutive transmembrane segments (helical) span residues glutamate 125–threonine 145, threonine 307–isoleucine 327, and leucine 338–valine 358.

This sequence belongs to the 1-acyl-sn-glycerol-3-phosphate acyltransferase family.

The protein localises to the endoplasmic reticulum membrane. The enzyme catalyses a 1-acyl-sn-glycero-3-phosphate + an acyl-CoA = a 1,2-diacyl-sn-glycero-3-phosphate + CoA. The catalysed reaction is (4Z,7Z,10Z,13Z,16Z,19Z)-docosahexaenoyl-CoA + 1-hexadecanoyl-sn-glycero-3-phosphate = 1-hexadecanoyl-2-(4Z,7Z,10Z,13Z,16Z,19Z-docosahexaenoyl)-sn-glycero-3-phosphate + CoA. It catalyses the reaction 1-octadecanoyl-sn-glycero-3-phosphate + (9Z,12Z)-octadecadienoyl-CoA = 1-octadecanoyl-2-(9Z,12Z-octadecadienoyl)-sn-glycero-3-phosphate + CoA. It carries out the reaction 1-octadecanoyl-sn-glycero-3-phosphate + (4Z,7Z,10Z,13Z,16Z,19Z)-docosahexaenoyl-CoA = 1-octadecanoyl-2-(4Z,7Z,10Z,13Z,16Z,19Z-docosahexaenoyl)-sn-glycero-3-phosphate + CoA. The enzyme catalyses (4Z,7Z,10Z,13Z,16Z,19Z)-docosahexaenoyl-CoA + 1-(9Z-octadecenoyl)-sn-glycero-3-phosphate = 1-(9Z-octadecenoyl)-2-(4Z,7Z,10Z,13Z,16Z,19Z-docosahexaenoyl)-sn-glycero-3-phosphate + CoA. The protein operates within phospholipid metabolism; CDP-diacylglycerol biosynthesis; CDP-diacylglycerol from sn-glycerol 3-phosphate: step 2/3. Functionally, converts 1-acyl-sn-glycerol-3-phosphate (lysophosphatidic acid or LPA) into 1,2-diacyl-sn-glycerol-3-phosphate (phosphatidic acid or PA) by incorporating an acyl moiety at the sn-2 position of the glycerol backbone. Exhibits high acyl-CoA specificity for polyunsaturated fatty acyl-CoA, especially docosahexaenoyl-CoA (22:6-CoA, DHA-CoA). In Bos taurus (Bovine), this protein is 1-acyl-sn-glycerol-3-phosphate acyltransferase delta (AGPAT4).